The sequence spans 282 residues: D-alanine aminotransferase (282 aa).

Substrate is bound at residue Tyr-32. Residue Arg-51 coordinates pyridoxal 5'-phosphate. Residues Arg-99 and His-101 each contribute to the substrate site. Lys-146 functions as the Proton acceptor in the catalytic mechanism. An N6-(pyridoxal phosphate)lysine modification is found at Lys-146. Glu-178 is a pyridoxal 5'-phosphate binding site.

Belongs to the class-IV pyridoxal-phosphate-dependent aminotransferase family. As to quaternary structure, homodimer. The cofactor is pyridoxal 5'-phosphate.

The enzyme catalyses D-alanine + 2-oxoglutarate = D-glutamate + pyruvate. Functionally, acts on the D-isomers of alanine, leucine, aspartate, glutamate, aminobutyrate, norvaline and asparagine. The enzyme transfers an amino group from a substrate D-amino acid to the pyridoxal phosphate cofactor to form pyridoxamine and an alpha-keto acid in the first half-reaction. The second half-reaction is the reverse of the first, transferring the amino group from the pyridoxamine to a second alpha-keto acid to form the product D-amino acid via a ping-pong mechanism. This is an important process in the formation of D-alanine and D-glutamate, which are essential bacterial cell wall components. The sequence is that of D-alanine aminotransferase (dat) from Staphylococcus aureus (strain COL).